The following is a 692-amino-acid chain: ABC1 family protein C21C3.03, mitochondrial (692 aa).

Residues 1–91 (MISFSHWNSH…RKFTTRQKSE (91 aa)) constitute a mitochondrion transit peptide. Helical transmembrane passes span 96–116 (WRIL…LWIL) and 161–181 (LFII…ISFL).

It belongs to the protein kinase superfamily. ADCK protein kinase family.

The protein localises to the mitochondrion membrane. In Schizosaccharomyces pombe (strain 972 / ATCC 24843) (Fission yeast), this protein is ABC1 family protein C21C3.03, mitochondrial.